The sequence spans 559 residues: Sulfite reductase [NADPH] hemoprotein beta-component (559 aa).

Residues Cys423, Cys429, Cys468, and Cys472 each contribute to the [4Fe-4S] cluster site. A siroheme-binding site is contributed by Cys472.

It belongs to the nitrite and sulfite reductase 4Fe-4S domain family. In terms of assembly, alpha(8)-beta(8). The alpha component is a flavoprotein, the beta component is a hemoprotein. Siroheme serves as cofactor. [4Fe-4S] cluster is required as a cofactor.

It catalyses the reaction hydrogen sulfide + 3 NADP(+) + 3 H2O = sulfite + 3 NADPH + 4 H(+). The protein operates within sulfur metabolism; hydrogen sulfide biosynthesis; hydrogen sulfide from sulfite (NADPH route): step 1/1. In terms of biological role, component of the sulfite reductase complex that catalyzes the 6-electron reduction of sulfite to sulfide. This is one of several activities required for the biosynthesis of L-cysteine from sulfate. This chain is Sulfite reductase [NADPH] hemoprotein beta-component, found in Thiocapsa roseopersicina.